Consider the following 327-residue polypeptide: Flotillin-like protein FloA (327 aa).

A helical membrane pass occupies residues 2 to 22 (IGLIIIVVIVLVALLLLFSFV). A disordered region spans residues 305 to 327 (ADTGMRNSINQRTNQKDDESPDK). Over residues 318 to 327 (NQKDDESPDK) the composition is skewed to basic and acidic residues.

It belongs to the flotillin-like FloA family. As to quaternary structure, homooligomerizes.

Its subcellular location is the cell membrane. The protein localises to the membrane raft. Its function is as follows. Found in functional membrane microdomains (FMM) that may be equivalent to eukaryotic membrane rafts. FMMs are highly dynamic and increase in number as cells age. Flotillins are thought to be important factors in membrane fluidity. The chain is Flotillin-like protein FloA from Staphylococcus saprophyticus subsp. saprophyticus (strain ATCC 15305 / DSM 20229 / NCIMB 8711 / NCTC 7292 / S-41).